The chain runs to 447 residues: Protein mab-21-like 4 (447 aa).

This Homo sapiens (Human) protein is Protein mab-21-like 4.